The following is a 284-amino-acid chain: Undecaprenyl-diphosphatase (284 aa).

The next 8 membrane-spanning stretches (helical) occupy residues 7–27 (IILG…TGHL), 44–64 (EMFD…LYFH), 90–110 (LWLK…PLND), 116–136 (FYHF…FIVI), 167–187 (VLSL…ALLV), 197–217 (FTFF…ILHF), 229–249 (FGVL…AIKF), and 259–279 (FTFF…YAMF).

Belongs to the UppP family.

Its subcellular location is the cell membrane. The enzyme catalyses di-trans,octa-cis-undecaprenyl diphosphate + H2O = di-trans,octa-cis-undecaprenyl phosphate + phosphate + H(+). Its function is as follows. Catalyzes the dephosphorylation of undecaprenyl diphosphate (UPP). Confers resistance to bacitracin. In Lactococcus lactis subsp. lactis (strain IL1403) (Streptococcus lactis), this protein is Undecaprenyl-diphosphatase.